The sequence spans 466 residues: Acetylcholine-gated chloride channel subunit acc-1 (466 aa).

Residues 1 to 24 (MSHPGWIMVSFLTELLSQSSKGIA) form the signal peptide. At 25–242 (QSLDNCANDT…FVFERRYGWY (218 aa)) the chain is on the extracellular side. N-linked (GlcNAc...) asparagine glycans are attached at residues Asn32, Asn102, and Asn143. Cys158 and Cys172 form a disulfide bridge. Asn211 carries an N-linked (GlcNAc...) asparagine glycan. A helical membrane pass occupies residues 243–263 (VLQGYIPTMVTIVISWISFYL). Topologically, residues 264–272 (GPRAIPART) are cytoplasmic. The helical transmembrane segment at 273–290 (MLGVNSLLAMTFQFGNII) threads the bilayer. Residues 291–304 (RNLPRVSYVKAIDV) are Extracellular-facing. Residues 305-325 (WMLSGMLFIFLSLLELAVVGF) form a helical membrane-spanning segment. Over 326–427 (MSRNEGLPPK…MRELRPETVD (102 aa)) the chain is Cytoplasmic. Positions 333-352 (PPKVKKRKRQEDDDEGFSWK) are disordered. The helical transmembrane segment at 428–448 (FYSAIFFPTAYMLFNISYWSF) threads the bilayer. Residues 449-466 (YLTSLSEYFDEDVNIDQP) lie on the Extracellular side of the membrane.

It belongs to the ligand-gated ion channel (TC 1.A.9) family. In terms of assembly, homopentamer (in vitro). Forms heteropentamers composed of acc-1 and acc-4 or acc-1 and acc-3. Both homopentamers and heteropentamers form functional ion channels. As to expression, expressed in a subset of cholinergic motor neurons including cholinergic motor neurons in the ventral cord, the retrovesicular ganglion and in head neurons such as the SMD, RMD motor neurons, the AVA and AVE command interneurons and the SAA neurons. Also expressed in a small number of glutamatergic neurons including the pharyngeal neurons MI and M3, the PLM neurons and a pair of neurons in the lateral ganglion.

Its subcellular location is the cell membrane. Functionally, acetylcholine-gated chloride channel subunit. Forms functional homopentameric (in vitro) and functional heteropentameric ion channels with acc-3 and acc-4 ion channel subunits. Currents in channels are triggered in response to acetylcholine, but not in response to GABA, glutamate, glycine, histamine or dopamine. The chain is Acetylcholine-gated chloride channel subunit acc-1 from Caenorhabditis elegans.